Here is a 149-residue protein sequence, read N- to C-terminus: MIKILGEGKGKEILKSLSEKLDEIVKKEIGNVNTNVILVSKDQIKEMNREFRGEDFPTDVLTFPLFEEVYGEIYICPEVVEENAKEYNNTFEKELIEVVIHGILHLAGYDHEFEDKNAKEMFEKQHIYVEEVWNEWRSSLSGGTGQEGT.

Zn(2+)-binding residues include H101, H105, and H111.

This sequence belongs to the endoribonuclease YbeY family. Zn(2+) is required as a cofactor.

The protein localises to the cytoplasm. Its function is as follows. Single strand-specific metallo-endoribonuclease involved in late-stage 70S ribosome quality control and in maturation of the 3' terminus of the 16S rRNA. This chain is Endoribonuclease YbeY, found in Thermotoga neapolitana (strain ATCC 49049 / DSM 4359 / NBRC 107923 / NS-E).